A 454-amino-acid polypeptide reads, in one-letter code: tRNA modification GTPase MnmE (454 aa).

3 residues coordinate (6S)-5-formyl-5,6,7,8-tetrahydrofolate: arginine 23, glutamate 80, and lysine 120. The TrmE-type G domain occupies 216–377 (GMKVVIAGRP…LRNHLKQSMG (162 aa)). Asparagine 226 contributes to the K(+) binding site. GTP is bound by residues 226 to 231 (NAGKSS), 245 to 251 (TDIAGTT), 270 to 273 (DTAG), 335 to 338 (NKAD), and 358 to 360 (SAR). Serine 230 provides a ligand contact to Mg(2+). Threonine 245, isoleucine 247, and threonine 250 together coordinate K(+). Threonine 251 contributes to the Mg(2+) binding site. Lysine 454 contributes to the (6S)-5-formyl-5,6,7,8-tetrahydrofolate binding site.

This sequence belongs to the TRAFAC class TrmE-Era-EngA-EngB-Septin-like GTPase superfamily. TrmE GTPase family. In terms of assembly, homodimer. Heterotetramer of two MnmE and two MnmG subunits. The cofactor is K(+).

Its subcellular location is the cytoplasm. In terms of biological role, exhibits a very high intrinsic GTPase hydrolysis rate. Involved in the addition of a carboxymethylaminomethyl (cmnm) group at the wobble position (U34) of certain tRNAs, forming tRNA-cmnm(5)s(2)U34. The polypeptide is tRNA modification GTPase MnmE (Escherichia coli O6:K15:H31 (strain 536 / UPEC)).